The sequence spans 111 residues: Integration host factor subunit alpha (111 aa).

This sequence belongs to the bacterial histone-like protein family. As to quaternary structure, heterodimer of an alpha and a beta chain.

Functionally, this protein is one of the two subunits of integration host factor, a specific DNA-binding protein that functions in genetic recombination as well as in transcriptional and translational control. This is Integration host factor subunit alpha from Polaromonas sp. (strain JS666 / ATCC BAA-500).